The chain runs to 60 residues: Large ribosomal subunit protein uL30 (60 aa).

Belongs to the universal ribosomal protein uL30 family. As to quaternary structure, part of the 50S ribosomal subunit.

The polypeptide is Large ribosomal subunit protein uL30 (Desulfotalea psychrophila (strain LSv54 / DSM 12343)).